The primary structure comprises 482 residues: Nuclear transcription factor Y subunit nfya-1 (482 aa).

The interval 1–160 is disordered; it reads MNGASRGDVQ…NGSYIQYNEP (160 aa). A compositionally biased stretch (polar residues) spans 72-93; it reads SSPNVQTQCHQPPVVRSQTHQA. The segment covering 94–110 has biased composition (low complexity); sequence SVSQTTPTQTTPSQYTP. 2 stretches are compositionally biased toward polar residues: residues 126-135 and 144-160; these read HVTPSQQQRI and VSQSQPQNGSYIQYNEP. Residues 306–329 carry the Subunit association domain (SAD) motif; the sequence is LVNPKQFNRIMRRREMRQQLEASG. A DNA-binding region (NFYA/HAP2-type) is located at residues 336–361; that stretch reads QKYLHESRHLHALKRKRGLDGRFDNT. Residues 344–414 form a disordered region; sequence HLHALKRKRG…QPKGGIVNSS (71 aa). The span at 353–362 shows a compositional bias: basic and acidic residues; it reads GLDGRFDNTK. Residues 363–375 show a composition bias toward low complexity; sequence TAESSSMVSSTTS.

It belongs to the NFYA/HAP2 subunit family. Forms a heterotrimeric transcription factor complex (nfya-1-NF-Y complex) composed of nfya-1, nfyb-1 and nfyc-1, which binds to 5'-CCAAT-3' box motif in the promoters of its target genes. Interacts with the nfyb-1 and nfyc-1 dimer; the interaction is required for subsequent binding to the 5'-CCAAT-3' box motif in DNA. Does not interact with either nfyb-1 or nfyc-1 in their monomeric form. Interacts with mes-3. Expressed in certain parts of the gonads with high expression in fertilized oocytes in the uterus and mature oocytes from the distal to the proximal arm of the gonad, but weak expression in the syncytial ovaries and immature oocytes at the beginning of the proximal arm of the gonad. Highly expressed in the head ganglia neurons and the developing hermaphrodite vulva and male tail. Weakly expressed in most somatic cells. Not expressed in the intestine, the hypodermis, body wall muscle surrounding the pseudocoelomic space, secretory cells in the pharyngeal terminal bulb wall, in the small ganglia surrounding the pharynx and in the neurons running anteriorly to the sensory organs in the head.

It is found in the nucleus. Functionally, component of the sequence-specific heterotrimeric transcription factor (nfya-1-NF-Y) which specifically recognizes a 5'-CCAAT-3' box motif found in the promoters of its target genes to regulate their expression and control cellular identity in particular tissue types. In association with the components in the nfya-1-NF-Y complex, represses the expression of the T-box transcription factor tbx-2 throughout larval development, which most likely restricts its expression to certain tissues. May act to repress txb-2 expression in conjunction with tbx-2 itself, which has an autoregulatory role. With the components in this complex, negatively regulates the expression of the homeobox protein egl-5 to spatially restrict its expression in tissues such as the head. May regulate egl-5 expression in association with the mes-2-mes-3-mes-6 complex. The protein is Nuclear transcription factor Y subunit nfya-1 of Caenorhabditis elegans.